Reading from the N-terminus, the 337-residue chain is Undecaprenyl-phosphate 4-deoxy-4-formamido-L-arabinose transferase (337 aa).

Helical transmembrane passes span 235–255 (LSIIGFSMALLGVLFAALLII) and 270–290 (FVLFAVLFVFTGGQFIGMGLL).

It belongs to the glycosyltransferase 2 family.

Its subcellular location is the cell inner membrane. It carries out the reaction UDP-4-deoxy-4-formamido-beta-L-arabinose + di-trans,octa-cis-undecaprenyl phosphate = 4-deoxy-4-formamido-alpha-L-arabinopyranosyl di-trans,octa-cis-undecaprenyl phosphate + UDP. It participates in glycolipid biosynthesis; 4-amino-4-deoxy-alpha-L-arabinose undecaprenyl phosphate biosynthesis; 4-amino-4-deoxy-alpha-L-arabinose undecaprenyl phosphate from UDP-4-deoxy-4-formamido-beta-L-arabinose and undecaprenyl phosphate: step 1/2. Its pathway is bacterial outer membrane biogenesis; lipopolysaccharide biosynthesis. Functionally, catalyzes the transfer of 4-deoxy-4-formamido-L-arabinose from UDP to undecaprenyl phosphate. The modified arabinose is attached to lipid A and is required for resistance to polymyxin and cationic antimicrobial peptides. This Pseudomonas savastanoi pv. phaseolicola (strain 1448A / Race 6) (Pseudomonas syringae pv. phaseolicola (strain 1448A / Race 6)) protein is Undecaprenyl-phosphate 4-deoxy-4-formamido-L-arabinose transferase.